The sequence spans 416 residues: MEPSATPGAQPGVPTSSGEPFHLPPDYEDEFLRYLWRDYLYPKQYEWVLIAAYVAVFLIALVGNTLVCLAVWRNHHMRTVTNYFIVNLSLADVLVTAICLPASLLVDITESWLFGHALCKVIPYLQAVSVSVAVLTLSFIALDRWYAICHPLLFKSTARRARGSILGIWAVSLAVMVPQAAVMECSSVLPELANRTRLFSVCDERWADELYPKIYHSCFFFVTYLAPLGLMGMAYFQIFRKLWGPQIPGTTSALVRNWKRPSEQLEAQHQGLCTEPQPRARAFLAEVKQMRARRKTAKMLMVVLLVFALCYLPISVLNVLKRVFGMFRQASDREAVYACFTFSHWLVYANSAANPIIYNFLSGKFREQFKAAFSCCLPGLGPSSSARHKSLSLQSRCSVSKVSEHVVLTTVTTVLS.

Residues 1–22 (MEPSATPGAQPGVPTSSGEPFH) form a disordered region. Residues 1–46 (MEPSATPGAQPGVPTSSGEPFHLPPDYEDEFLRYLWRDYLYPKQYE) are Extracellular-facing. Residues 26–41 (DYEDEFLRYLWRDYLY) form a required for response to orexin-A region. A helical transmembrane segment spans residues 47-67 (WVLIAAYVAVFLIALVGNTLV). Residues 68–82 (CLAVWRNHHMRTVTN) are Cytoplasmic-facing. The chain crosses the membrane as a helical span at residues 83-105 (YFIVNLSLADVLVTAICLPASLL). The Extracellular portion of the chain corresponds to 106–119 (VDITESWLFGHALC). A disulfide bond links Cys119 and Cys202. The helical transmembrane segment at 120 to 140 (KVIPYLQAVSVSVAVLTLSFI) threads the bilayer. The Cytoplasmic portion of the chain corresponds to 141–160 (ALDRWYAICHPLLFKSTARR). The helical transmembrane segment at 161-182 (ARGSILGIWAVSLAVMVPQAAV) threads the bilayer. Residues 183 to 213 (MECSSVLPELANRTRLFSVCDERWADELYPK) lie on the Extracellular side of the membrane. Asn194 carries an N-linked (GlcNAc...) asparagine glycan. The chain crosses the membrane as a helical span at residues 214 to 235 (IYHSCFFFVTYLAPLGLMGMAY). Residues 236-298 (FQIFRKLWGP…QMRARRKTAK (63 aa)) are Cytoplasmic-facing. A helical membrane pass occupies residues 299–321 (MLMVVLLVFALCYLPISVLNVLK). Over 322-336 (RVFGMFRQASDREAV) the chain is Extracellular. The helical transmembrane segment at 337–360 (YACFTFSHWLVYANSAANPIIYNF) threads the bilayer. Topologically, residues 361 to 416 (LSGKFREQFKAAFSCCLPGLGPSSSARHKSLSLQSRCSVSKVSEHVVLTTVTTVLS) are cytoplasmic.

Belongs to the G-protein coupled receptor 1 family. As to expression, highly expressed in the brain in the prefrontal cortex, hippocampus, paraventricular thalamus, ventromedial hypothalamus, arcuate nucleus, dorsal raphe nucleus, and locus coeruleus. Not detected in the spleen, lung, liver, skeletal muscle, kidney and testis. Orexin receptor mRNA expression has also been reported in the adrenal gland, enteric nervous system, and pancreas.

The protein localises to the cell membrane. Functionally, moderately selective excitatory receptor for orexin-A and, with a lower affinity, for orexin-B neuropeptide. Triggers an increase in cytoplasmic Ca(2+) levels in response to orexin-A binding. The chain is Orexin/Hypocretin receptor type 1 from Rattus norvegicus (Rat).